Reading from the N-terminus, the 127-residue chain is Protein ApaG (127 aa).

The region spanning Glu-3–His-127 is the ApaG domain.

The chain is Protein ApaG from Thiobacillus denitrificans (strain ATCC 25259 / T1).